Here is a 319-residue protein sequence, read N- to C-terminus: MGFDEKREPTGGRLRLQDIPALTQDHCRMRDPAEVERIINEFVIGGPERMQIVSDFDYTITKQRTEDGGAVPSSFGIFNACQSLPENFKAETDKLYHKYRPIEIDPHMPIAEKVQYMIEWWTKSGELTSGFPFDQSEIDQIASKYTHALRDRTHEFFADLQRLGIPTLVFSAGLGNSVVSVLRQANVLHPNVKVVSNFLQFRDGLLDGFQQPMIHTFNKNETVLNETSEYYDLVHTRDHIIVMGDSIGDADMASGVPASSHIMKIGFLFDHVEANMKKYMDTFDIVLVDDQTMDVPRTLLSLIEKQHKLNLEAPKQSSL.

D55 functions as the Nucleophile in the catalytic mechanism. D55 and D57 together coordinate Mg(2+). Residue D57 is the Proton donor of the active site. Position 103 (E103) interacts with CMP. Residues E103 and S124 each coordinate N(7)-methyl-GMP. Position 171 to 172 (171 to 172 (SA)) interacts with substrate. Residue D245 participates in Mg(2+) binding.

It belongs to the pyrimidine 5'-nucleotidase family. Monomer. Mg(2+) is required as a cofactor.

It catalyses the reaction N(7)-methyl-GMP + H2O = N(7)-methylguanosine + phosphate. The catalysed reaction is CMP + H2O = cytidine + phosphate. The enzyme catalyses a ribonucleoside 5'-phosphate + H2O = a ribonucleoside + phosphate. With respect to regulation, inhibited by high levels of AMP. Functionally, specifically hydrolyzes 7-methylguanosine monophosphate (m(7)GMP) to 7-methylguanosine and inorganic phosphate. Also able to mediate hydrolysis of diphosphate (m(7)GDP) to 7-methylguanosine and 2 inorganic phosphate with lower activity. The specific activity for m(7)GMP may protect cells against undesired salvage of m(7)GMP and its incorporation into nucleic acids. Also has weak activity for CMP. UMP and purine nucleotides are poor substrates. This is 7-methylguanosine phosphate-specific 5'-nucleotidase from Drosophila melanogaster (Fruit fly).